The sequence spans 430 residues: Adenylosuccinate synthetase (430 aa).

GTP-binding positions include 11–17 (GDEGKGK) and 39–41 (GHS). Asp-12 serves as the catalytic Proton acceptor. Mg(2+)-binding residues include Asp-12 and Gly-39. Residues 12 to 15 (DEGK), 37 to 40 (NAGH), Thr-129, Arg-143, Asn-221, Thr-236, and Arg-300 each bind IMP. His-40 (proton donor) is an active-site residue. 296-302 (VSTGRKR) contributes to the substrate binding site. Residues Arg-302, 328 to 330 (KLD), and 412 to 414 (GTG) each bind GTP.

It belongs to the adenylosuccinate synthetase family. In terms of assembly, homodimer. The cofactor is Mg(2+).

The protein localises to the cytoplasm. The catalysed reaction is IMP + L-aspartate + GTP = N(6)-(1,2-dicarboxyethyl)-AMP + GDP + phosphate + 2 H(+). It functions in the pathway purine metabolism; AMP biosynthesis via de novo pathway; AMP from IMP: step 1/2. Functionally, plays an important role in the de novo pathway and in the salvage pathway of purine nucleotide biosynthesis. Catalyzes the first committed step in the biosynthesis of AMP from IMP. In Sordaria macrospora (strain ATCC MYA-333 / DSM 997 / K(L3346) / K-hell), this protein is Adenylosuccinate synthetase.